A 289-amino-acid chain; its full sequence is ATP synthase gamma chain (289 aa).

This sequence belongs to the ATPase gamma chain family. F-type ATPases have 2 components, CF(1) - the catalytic core - and CF(0) - the membrane proton channel. CF(1) has five subunits: alpha(3), beta(3), gamma(1), delta(1), epsilon(1). CF(0) has three main subunits: a, b and c.

It is found in the cell membrane. Functionally, produces ATP from ADP in the presence of a proton gradient across the membrane. The gamma chain is believed to be important in regulating ATPase activity and the flow of protons through the CF(0) complex. This is ATP synthase gamma chain from Lactococcus lactis subsp. lactis (strain IL1403) (Streptococcus lactis).